The sequence spans 216 residues: Probable transaldolase (216 aa).

The active-site Schiff-base intermediate with substrate is the K83.

It belongs to the transaldolase family. Type 3B subfamily.

It localises to the cytoplasm. It catalyses the reaction D-sedoheptulose 7-phosphate + D-glyceraldehyde 3-phosphate = D-erythrose 4-phosphate + beta-D-fructose 6-phosphate. It participates in carbohydrate degradation; pentose phosphate pathway; D-glyceraldehyde 3-phosphate and beta-D-fructose 6-phosphate from D-ribose 5-phosphate and D-xylulose 5-phosphate (non-oxidative stage): step 2/3. Its function is as follows. Transaldolase is important for the balance of metabolites in the pentose-phosphate pathway. The sequence is that of Probable transaldolase from Methanococcus aeolicus (strain ATCC BAA-1280 / DSM 17508 / OCM 812 / Nankai-3).